Here is a 341-residue protein sequence, read N- to C-terminus: GDP-fucose transporter 1 (341 aa).

The next 10 membrane-spanning stretches (helical) occupy residues 17-37 (LVIG…LAIT), 41-61 (YPGL…YLLG), 71-91 (FTWD…LAIF), 103-123 (DTFI…DTVF), 132-152 (LTFL…ATDS), 156-176 (LTAY…MVYI), 187-207 (IWGL…VFWF), 231-251 (AFSS…FGFA), 260-280 (AFTV…VLIW), and 283-303 (HATP…VGYQ). Positions 316–341 (SEKDSEKGEEDEELTQLVPGKLASVV) are disordered.

It belongs to the nucleotide-sugar transporter family. GDP-Mannose:GMP antiporter (GMA) (TC 2.A.7.13) subfamily. Ubiquitous.

It is found in the golgi apparatus membrane. In terms of biological role, acts as the major nucleotide-sugar transporter for the import of GDP-Fucose into the Golgi lumen. Transports GDP-Fucose in a strict counter-exchange mode. Is required for proper plant growth and development. Also acts as a GDP-mannose transporter that may be involved in the import of GDP-mannose from the cytoplasm into the Golgi lumen. The chain is GDP-fucose transporter 1 from Arabidopsis thaliana (Mouse-ear cress).